Here is a 912-residue protein sequence, read N- to C-terminus: Type II beta methyltransferase M.BslI (912 aa).

This sequence belongs to the N(4)/N(6)-methyltransferase family. N(4) subfamily.

It carries out the reaction a 2'-deoxycytidine in DNA + S-adenosyl-L-methionine = an N(4)-methyl-2'-deoxycytidine in DNA + S-adenosyl-L-homocysteine + H(+). In terms of biological role, a beta subtype methylase. Recognizes the double-stranded sequence 5'-CCN(7)GG-3', methylates C-2 on both strands, and protects the DNA from cleavage by the BslI endonuclease. The sequence is that of Type II beta methyltransferase M.BslI (bslIM) from Bacillus sp. (strain NEB-606).